The primary structure comprises 142 residues: Ribosome-binding factor A (142 aa).

Residues 120 to 142 (TLGEVQSESDQPTTYETTTVNKT) are disordered. A compositionally biased stretch (polar residues) spans 123–142 (EVQSESDQPTTYETTTVNKT).

It belongs to the RbfA family. In terms of assembly, monomer. Binds 30S ribosomal subunits, but not 50S ribosomal subunits or 70S ribosomes.

The protein resides in the cytoplasm. Functionally, one of several proteins that assist in the late maturation steps of the functional core of the 30S ribosomal subunit. Associates with free 30S ribosomal subunits (but not with 30S subunits that are part of 70S ribosomes or polysomes). Required for efficient processing of 16S rRNA. May interact with the 5'-terminal helix region of 16S rRNA. This is Ribosome-binding factor A from Prochlorococcus marinus (strain MIT 9313).